A 60-amino-acid chain; its full sequence is Conotoxin PnMRCL-022 (60 aa).

A signal peptide spans 1 to 22 (MRCLPVFVILLLLIASTPSVNA). The propeptide occupies 23–45 (RPKTKDLASFHDNAKRTQHIFWS).

It belongs to the conotoxin T superfamily. In terms of processing, contains 2 disulfide bonds that can be either 'C1-C3, C2-C4' or 'C1-C4, C2-C3', since these disulfide connectivities have been observed for conotoxins with cysteine framework V (for examples, see AC P0DQQ7 and AC P81755). In terms of tissue distribution, expressed by the venom duct.

Its subcellular location is the secreted. The chain is Conotoxin PnMRCL-022 from Conus pennaceus (Feathered cone).